Consider the following 422-residue polypeptide: UDP-N-acetylglucosamine 1-carboxyvinyltransferase (422 aa).

Residue 22-23 (KN) participates in phosphoenolpyruvate binding. Residue arginine 94 coordinates UDP-N-acetyl-alpha-D-glucosamine. Cysteine 118 functions as the Proton donor in the catalytic mechanism. Cysteine 118 bears the 2-(S-cysteinyl)pyruvic acid O-phosphothioketal mark. UDP-N-acetyl-alpha-D-glucosamine is bound by residues 123-127 (RPVDL), aspartate 309, and isoleucine 331.

It belongs to the EPSP synthase family. MurA subfamily.

It localises to the cytoplasm. It carries out the reaction phosphoenolpyruvate + UDP-N-acetyl-alpha-D-glucosamine = UDP-N-acetyl-3-O-(1-carboxyvinyl)-alpha-D-glucosamine + phosphate. The protein operates within cell wall biogenesis; peptidoglycan biosynthesis. Cell wall formation. Adds enolpyruvyl to UDP-N-acetylglucosamine. The sequence is that of UDP-N-acetylglucosamine 1-carboxyvinyltransferase from Cereibacter sphaeroides (strain ATCC 17029 / ATH 2.4.9) (Rhodobacter sphaeroides).